Reading from the N-terminus, the 154-residue chain is 6,7-dimethyl-8-ribityllumazine synthase (154 aa).

5-amino-6-(D-ribitylamino)uracil-binding positions include F22, 56 to 58 (AFE), and 80 to 82 (TVI). 85-86 (AT) lines the (2S)-2-hydroxy-3-oxobutyl phosphate pocket. Catalysis depends on H88, which acts as the Proton donor. Residue F113 participates in 5-amino-6-(D-ribitylamino)uracil binding. R127 contacts (2S)-2-hydroxy-3-oxobutyl phosphate.

It belongs to the DMRL synthase family. Forms an icosahedral capsid composed of 60 subunits, arranged as a dodecamer of pentamers.

It catalyses the reaction (2S)-2-hydroxy-3-oxobutyl phosphate + 5-amino-6-(D-ribitylamino)uracil = 6,7-dimethyl-8-(1-D-ribityl)lumazine + phosphate + 2 H2O + H(+). Its pathway is cofactor biosynthesis; riboflavin biosynthesis; riboflavin from 2-hydroxy-3-oxobutyl phosphate and 5-amino-6-(D-ribitylamino)uracil: step 1/2. Functionally, catalyzes the formation of 6,7-dimethyl-8-ribityllumazine by condensation of 5-amino-6-(D-ribitylamino)uracil with 3,4-dihydroxy-2-butanone 4-phosphate. This is the penultimate step in the biosynthesis of riboflavin. The chain is 6,7-dimethyl-8-ribityllumazine synthase from Bacillus pumilus (strain SAFR-032).